The sequence spans 562 residues: Protein FAM222B (562 aa).

2 stretches are compositionally biased toward low complexity: residues 155–167 (QQAL…LAHA) and 183–201 (ALSH…HPQP). 3 disordered regions span residues 155–203 (QQAL…QPMA), 219–245 (LQHP…VTVS), and 537–562 (AHRA…PGYR).

It belongs to the FAM222 family.

The sequence is that of Protein FAM222B (FAM222B) from Homo sapiens (Human).